The following is a 359-amino-acid chain: 3-isopropylmalate dehydrogenase (359 aa).

Position 76 to 89 (76 to 89 (GPKWDDPSAKTRPE)) interacts with NAD(+). Positions 96, 106, 134, and 223 each coordinate substrate. The Mg(2+) site is built by Asp223, Asp247, and Asp251. 281–293 (GSAPDIAGKSVAN) provides a ligand contact to NAD(+).

Belongs to the isocitrate and isopropylmalate dehydrogenases family. LeuB type 1 subfamily. As to quaternary structure, homodimer. Mg(2+) serves as cofactor. Mn(2+) is required as a cofactor.

It is found in the cytoplasm. The catalysed reaction is (2R,3S)-3-isopropylmalate + NAD(+) = 4-methyl-2-oxopentanoate + CO2 + NADH. Its pathway is amino-acid biosynthesis; L-leucine biosynthesis; L-leucine from 3-methyl-2-oxobutanoate: step 3/4. Catalyzes the oxidation of 3-carboxy-2-hydroxy-4-methylpentanoate (3-isopropylmalate) to 3-carboxy-4-methyl-2-oxopentanoate. The product decarboxylates to 4-methyl-2 oxopentanoate. The chain is 3-isopropylmalate dehydrogenase from Rhodopirellula baltica (strain DSM 10527 / NCIMB 13988 / SH1).